A 1224-amino-acid chain; its full sequence is Tyrosine-protein kinase abl-1 (1224 aa).

An SH3 domain is found at 115 to 188; sequence SSAPLFVALY…PSNFIAPYNS (74 aa). Positions 194–284 constitute an SH2 domain; it reads WYHGKISRSD…GLICLLMYPA (91 aa). The Protein kinase domain maps to 311 to 562; the sequence is IIMHNKLGGG…PRFRDIHFNL (252 aa). Residues 317 to 325, Lys-340, and 385 to 391 each bind ATP; these read LGGGQYGDV and EFMCNGN. The active-site Proton acceptor is Asp-432. The Kinase activation loop motif lies at 450–474; it reads DFGLARFMKEDTYTAHAGAKFPIKW. The span at 579–620 shows a compositional bias: basic and acidic residues; the sequence is LKKNNDKKLESDKRRSNVRERSDSKSRHSSHHDRDRDRESLH. Disordered stretches follow at residues 579–671, 736–775, 796–881, 914–937, and 968–1016; these read LKKN…NTKP, KEST…STYV, KRSE…DVGM, LRHV…ATDN, and RPFS…RSNG. 2 stretches are compositionally biased toward polar residues: residues 639-655 and 746-760; these read SVSF…TSFR and AGSS…NDSL. Composition is skewed to basic and acidic residues over residues 797–819 and 864–877; these read RSET…KSEK and PDSK…ETTK. A compositionally biased stretch (polar residues) spans 973–984; it reads QCPNNSTSSAIS. The segment covering 1001 to 1016 has biased composition (basic and acidic residues); sequence YEERMKPELPRKRSNG.

It belongs to the protein kinase superfamily. Tyr protein kinase family. ABL subfamily. In terms of assembly, interacts (via SH2 and SH3 domains) with mig-13; the interaction is direct. May interact with soem-1.

The protein localises to the cell membrane. It localises to the cytoplasm. It catalyses the reaction L-tyrosyl-[protein] + ATP = O-phospho-L-tyrosyl-[protein] + ADP + H(+). Functions downstream of migratory protein mig-13 and is involved in Q neuroblast migration during larval development. Recruited by mig-13 to the leading edge of Q neuroblasts and their descendents to signal downstream, likely to the wve-1 pathway, and direct migration along the anteroposterior body axis. Promotes germline cell apoptosis in response to oxidative, osmotic and heat shock stresses. In Caenorhabditis elegans, this protein is Tyrosine-protein kinase abl-1 (abl-1).